Reading from the N-terminus, the 166-residue chain is Urocortin-3 (166 aa).

Residues Met-1–Ser-23 form the signal peptide. Positions Gln-24 to Thr-123 are excised as a propeptide. A compositionally biased stretch (basic and acidic residues) spans Arg-41–Thr-51. The tract at residues Arg-41–Thr-123 is disordered. The span at Glu-68–Asp-77 shows a compositional bias: acidic residues. The segment covering Ser-86–Gly-96 has biased composition (gly residues). Positions Ser-113–Thr-123 are enriched in basic and acidic residues. Ile-162 is subject to Isoleucine amide.

The protein belongs to the sauvagine/corticotropin-releasing factor/urotensin I family. Binds with high affinity to CRF receptors 2-alpha and 2-beta.

It is found in the secreted. In terms of biological role, suppresses food intake, delays gastric emptying and decreases heat-induced edema. Might represent an endogenous ligand for maintaining homeostasis after stress. The polypeptide is Urocortin-3 (UCN3) (Bos taurus (Bovine)).